We begin with the raw amino-acid sequence, 228 residues long: Geranylgeranylglyceryl phosphate synthase (228 aa).

A sn-glycerol 1-phosphate-binding site is contributed by lysine 13. Mg(2+)-binding residues include aspartate 15 and threonine 41. Residues 159–164 (YVEYSG), glycine 189, and 209–210 (GN) contribute to the sn-glycerol 1-phosphate site.

It belongs to the GGGP/HepGP synthase family. Group I subfamily. The cofactor is Mg(2+).

Its subcellular location is the cytoplasm. It catalyses the reaction sn-glycerol 1-phosphate + (2E,6E,10E)-geranylgeranyl diphosphate = sn-3-O-(geranylgeranyl)glycerol 1-phosphate + diphosphate. The protein operates within membrane lipid metabolism; glycerophospholipid metabolism. Functionally, prenyltransferase that catalyzes the transfer of the geranylgeranyl moiety of geranylgeranyl diphosphate (GGPP) to the C3 hydroxyl of sn-glycerol-1-phosphate (G1P). This reaction is the first ether-bond-formation step in the biosynthesis of archaeal membrane lipids. The sequence is that of Geranylgeranylglyceryl phosphate synthase from Methanosphaerula palustris (strain ATCC BAA-1556 / DSM 19958 / E1-9c).